The primary structure comprises 107 residues: MAQEFVNCKIQSGKVVVFIKPTCPYCRKTQEILSQLPFKQGLLEFVDITATNNTSAIQDYLQQLTGARTVPRVFIGKDCIGGCSDLISMQQTGELMTRLKQIGALQL.

Ala-2 is subject to N-acetylalanine. The region spanning 3 to 106 (QEFVNCKIQS…TRLKQIGALQ (104 aa)) is the Glutaredoxin domain. Lys-9 carries the post-translational modification N6-succinyllysine. 2 cysteine pairs are disulfide-bonded: Cys-23–Cys-26 and Cys-79–Cys-83.

Belongs to the glutaredoxin family.

It is found in the cytoplasm. In terms of biological role, has a glutathione-disulfide oxidoreductase activity in the presence of NADPH and glutathione reductase. Reduces low molecular weight disulfides and proteins. This is Glutaredoxin-1 (Glrx) from Mus musculus (Mouse).